The sequence spans 628 residues: Forkhead box protein O (628 aa).

Disordered regions lie at residues 39-77 (RARS…DSQQ), 182-205 (KSVR…RAKK), 217-269 (GLND…RLSP), 316-359 (QQQG…APGY), and 389-415 (NSVT…YSNV). T44 carries the phosphothreonine; by PKB/AKT1 modification. Over residues 63 to 77 (TKASNQQLAPGDSQQ) the composition is skewed to polar residues. Position 75 is a phosphoserine (S75). A DNA-binding region (fork-head) is located at residues 95–201 (WGNLSYADLI…ETSRYEKRRG (107 aa)). S190 carries the phosphoserine; by PKB/AKT1 modification. Polar residues-rich tracts occupy residues 221 to 230 (ATPSPSSSVS) and 256 to 265 (RASSNASSCG). S259 carries the phosphoserine; by PKB/AKT1 modification. S262, S263, and S268 each carry phosphoserine. Residues 328–337 (SQPPPPPYQP) show a composition bias toward pro residues. The span at 338–351 (PQHQQAQQQQSPYA) shows a compositional bias: low complexity. The segment covering 402–414 (SEPSSDSLNTYSN) has biased composition (polar residues).

In terms of assembly, interacts with melt.

It is found in the cytoplasm. The protein resides in the nucleus. Transcription factor involved in the regulation of the insulin signaling pathway. Consistently activates both the downstream target Thor\d4EBP and the feedback control target InR. Involved in negative regulation of the cell cycle, modulating cell growth and proliferation. In response to cellular stresses, such as nutrient deprivation or increased levels of reactive oxygen species, foxo is activated and inhibits growth through the action of target genes such as Thor. Foxo activated in the adult fat body can regulate lifespan in adults; an insulin peptide itself may function as one secondary messenger of insulin-regulated aging. Also regulates Lip4, homolog of human acid lipases, thereby acting as a key modulator of lipid metabolism by insulin signaling and integrates insulin responses to glucose and lipid homeostasis. This chain is Forkhead box protein O, found in Drosophila yakuba (Fruit fly).